Here is a 202-residue protein sequence, read N- to C-terminus: Large ribosomal subunit protein uL4 (202 aa).

A disordered region spans residues 40 to 71; that stretch reads GRQGSKAQKTRSQVSGGGKKPWRQKGSGRARA. The segment covering 44–53 has biased composition (polar residues); that stretch reads SKAQKTRSQV.

This sequence belongs to the universal ribosomal protein uL4 family. In terms of assembly, part of the 50S ribosomal subunit.

One of the primary rRNA binding proteins, this protein initially binds near the 5'-end of the 23S rRNA. It is important during the early stages of 50S assembly. It makes multiple contacts with different domains of the 23S rRNA in the assembled 50S subunit and ribosome. Its function is as follows. Forms part of the polypeptide exit tunnel. The chain is Large ribosomal subunit protein uL4 from Hahella chejuensis (strain KCTC 2396).